A 467-amino-acid chain; its full sequence is Immunoglobulin superfamily member 21 (467 aa).

A signal peptide spans 1–24; it reads MRTAPSLRRCVCLLLAAILDLARG. The region spanning 25 to 132 is the Ig-like 1 domain; the sequence is YLTVNIEPLP…RATREKVVLA (108 aa). Cys46 and Cys116 are oxidised to a cystine. Residues Asn82 and Asn165 are each glycosylated (N-linked (GlcNAc...) asparagine). The segment at 229–259 is disordered; sequence LSLLDAENRGGRPYTERPSRGLTPDPNILLQ. The segment covering 234–247 has biased composition (basic and acidic residues); the sequence is AENRGGRPYTERPS. An Ig-like 2 domain is found at 344 to 429; the sequence is PKIVMTPSRA…GSTDTHTRLI (86 aa). Residues Asn407 and Asn444 are each glycosylated (N-linked (GlcNAc...) asparagine).

Interacts (Ig-like 1 domain) with NRXN2 (via Laminin G-like 1 domain) in a trans-interaction manner.

The protein resides in the postsynaptic cell membrane. Functionally, involved in synaptic inhibition in the brain. Selectively regulates inhibitory presynaptic differentiation through interacting with presynaptic NRXN2. This chain is Immunoglobulin superfamily member 21, found in Homo sapiens (Human).